Reading from the N-terminus, the 418-residue chain is UDP-N-acetylglucosamine 1-carboxyvinyltransferase (418 aa).

A phosphoenolpyruvate-binding site is contributed by 22 to 23 (KN). Arg92 lines the UDP-N-acetyl-alpha-D-glucosamine pocket. The active-site Proton donor is Cys116. Residue Cys116 is modified to 2-(S-cysteinyl)pyruvic acid O-phosphothioketal. Residues 121 to 125 (RPIDL), Asp305, and Leu327 each bind UDP-N-acetyl-alpha-D-glucosamine.

Belongs to the EPSP synthase family. MurA subfamily.

The protein localises to the cytoplasm. It carries out the reaction phosphoenolpyruvate + UDP-N-acetyl-alpha-D-glucosamine = UDP-N-acetyl-3-O-(1-carboxyvinyl)-alpha-D-glucosamine + phosphate. Its pathway is cell wall biogenesis; peptidoglycan biosynthesis. In terms of biological role, cell wall formation. Adds enolpyruvyl to UDP-N-acetylglucosamine. This is UDP-N-acetylglucosamine 1-carboxyvinyltransferase from Campylobacter lari (strain RM2100 / D67 / ATCC BAA-1060).